We begin with the raw amino-acid sequence, 275 residues long: tRNA pseudouridine synthase A (275 aa).

Asp-60 (nucleophile) is an active-site residue. Residue Tyr-119 participates in substrate binding.

The protein belongs to the tRNA pseudouridine synthase TruA family. As to quaternary structure, homodimer.

It carries out the reaction uridine(38/39/40) in tRNA = pseudouridine(38/39/40) in tRNA. Its function is as follows. Formation of pseudouridine at positions 38, 39 and 40 in the anticodon stem and loop of transfer RNAs. In Synechocystis sp. (strain ATCC 27184 / PCC 6803 / Kazusa), this protein is tRNA pseudouridine synthase A.